We begin with the raw amino-acid sequence, 307 residues long: MRIIFAGTPDFAVASLRAAAQRHEVVAVYTQPDRPAGRGRGLTPSPVKIEAIARGIAVFQPQTLRSPEALATLRSLNADLMVVVAYGLILPNAVLAVPTHGCWNVHASLLPRWRGAAPIQRAIEAGDTETGVCLMQMEAGLDIGPVLLSQRIEIGEQETGGQLHDRLAALGAQVLSDGLGLLRAGIRPVAQPQPAEGVTYAHKLDKAQARLDWAQPAQELARRVRAFNPWPVAEAILAGERVRLHGAVALELAHQQPPGSLLAASKQGIDIACGQGALRVRVLQREGGKAITAADYLNARRDLLALR.

108 to 111 contributes to the (6S)-5,6,7,8-tetrahydrofolate binding site; that stretch reads SLLP.

Belongs to the Fmt family.

The catalysed reaction is L-methionyl-tRNA(fMet) + (6R)-10-formyltetrahydrofolate = N-formyl-L-methionyl-tRNA(fMet) + (6S)-5,6,7,8-tetrahydrofolate + H(+). In terms of biological role, attaches a formyl group to the free amino group of methionyl-tRNA(fMet). The formyl group appears to play a dual role in the initiator identity of N-formylmethionyl-tRNA by promoting its recognition by IF2 and preventing the misappropriation of this tRNA by the elongation apparatus. This chain is Methionyl-tRNA formyltransferase, found in Xanthomonas oryzae pv. oryzae (strain MAFF 311018).